A 526-amino-acid polypeptide reads, in one-letter code: Rho guanine nucleotide exchange factor 3 (526 aa).

The tract at residues 20 to 40 (ELPPASGPAKDAEEPSNKRVK) is disordered. Phosphoserine is present on residues Ser47 and Ser70. Positions 122 to 304 (KRQEAIFELS…QGIVAEINTK (183 aa)) constitute a DH domain. The PH domain maps to 291–449 (INIIQGIVAE…WLNCIRQAKE (159 aa)). Disordered stretches follow at residues 464 to 502 (EGSF…TSEV) and 507 to 526 (EHME…ESNV). Residues 466-475 (SFLNPTTGSR) are compositionally biased toward polar residues.

Interacts with RHOA and RHOB.

It localises to the cytoplasm. In terms of biological role, acts as a guanine nucleotide exchange factor (GEF) for RhoA and RhoB GTPases. In Macaca fascicularis (Crab-eating macaque), this protein is Rho guanine nucleotide exchange factor 3 (ARHGEF3).